The following is a 298-amino-acid chain: UDP-N-acetylenolpyruvoylglucosamine reductase (298 aa).

In terms of domain architecture, FAD-binding PCMH-type spans 26–191 (KTGGAADVFV…LDATFSLALE (166 aa)). Residue R170 is part of the active site. S220 serves as the catalytic Proton donor. E290 is a catalytic residue.

This sequence belongs to the MurB family. FAD is required as a cofactor.

The protein localises to the cytoplasm. The enzyme catalyses UDP-N-acetyl-alpha-D-muramate + NADP(+) = UDP-N-acetyl-3-O-(1-carboxyvinyl)-alpha-D-glucosamine + NADPH + H(+). It participates in cell wall biogenesis; peptidoglycan biosynthesis. Its function is as follows. Cell wall formation. The chain is UDP-N-acetylenolpyruvoylglucosamine reductase from Listeria monocytogenes serovar 1/2a (strain ATCC BAA-679 / EGD-e).